The chain runs to 995 residues: MAGVQKRKRDLEDQDDNGSEEDDIAFDIANEIALNDSESDANDSDSEVEADYGPNDVQDVIEYSSDEEEGVNNKKKAENKDIKKKKNSKKEIAAFPMLEMSDDENNASGKTQTGDDEDDVNEYFSTNNLEKTKHKKGSFPSFGLSKIVLNNIKRKGFRQPTPIQRKTIPLILQSRDIVGMARTGSGKTAAFILPMVEKLKSHSGKIGARAVILSPSRELAMQTFNVFKDFARGTELRSVLLTGGDSLEEQFGMMMTNPDVIIATPGRFLHLKVEMNLDLKSVEYVVFDEADRLFEMGFQEQLNELLASLPTTRQTLLFSATLPNSLVDFVKAGLVNPVLVRLDAETKVSENLEMLFLSSKNADREANLLYILQEIIKIPLATSEQLQKLQNSNNEADSDSDDENDRQKKRRNFKKEKFRKQKMPAANELPSEKATILFVPTRHHVEYISQLLRDCGYLISYIYGTLDQHARKRQLYNFRAGLTSILVVTDVAARGVDIPMLANVINYTLPGSSKIFVHRVGRTARAGNKGWAYSIVAENELPYLLDLELFLGEKILLTPMYDSLVDVMKKRWIDEGKPEYQFQPPKLSYTKRLVLGSCPRLDVEGLGDLYKNLMSSNFDLQLAKKTAMKAEKLYYRTRTSASPESLKRSKEIISSGWDAQNAFFGKNEEKEKLDFLAKLQNRRNKETVFEFTRNPDDEMAVFMKRRRKQLAPIQRKATERRELLEKERMAGLSHSIEDEILKGDDGETGYTVSEDALKEFEDADQLLEAQENENKKKKKPKSFKDPTFFLSHYAPAGEIQDKQLQITNGFANDAAQAAYDLNSDDKVQVHKQTATVKWDKKRKKYVNTQGIDNKKYIIGESGQKIAASFRSGRFDDWSKARNLKPLKVGSRETSIPSNLLEDPSQGPAANGRTVRGKFKHKQMKAPKMPDKHRDNYYSQKKKVEKALQSGISVKGYNNAPGLRSELKSTEQIRKDRIIAEKKRAKNARPSKKRKF.

The segment at 1–120 (MAGVQKRKRD…TQTGDDEDDV (120 aa)) is disordered. Composition is skewed to acidic residues over residues 12–25 (EDQDDNGSEEDDIA) and 37–50 (SESDANDSDSEVEA). Residues 71–81 (VNNKKKAENKD) are compositionally biased toward basic and acidic residues. S101 is subject to Phosphoserine. The Q motif signature appears at 137 to 165 (GSFPSFGLSKIVLNNIKRKGFRQPTPIQR). The region spanning 168-340 (IPLILQSRDI…KAGLVNPVLV (173 aa)) is the Helicase ATP-binding domain. Residue 181–188 (ARTGSGKT) participates in ATP binding. Residues 288–291 (DEAD) carry the DEAD box motif. 2 disordered regions span residues 389–427 (LQNSNNEADSDSDDENDRQKKRRNFKKEKFRKQKMPAAN) and 889–973 (GSRE…EQIR). 2 positions are modified to phosphoserine: S398 and S400. 2 stretches are compositionally biased toward basic residues: residues 407 to 422 (QKKRRNFKKEKFRKQK) and 914 to 924 (VRGKFKHKQMK). A Helicase C-terminal domain is found at 418-568 (FRKQKMPAAN…PMYDSLVDVM (151 aa)). The segment covering 964–973 (SELKSTEQIR) has biased composition (basic and acidic residues).

Belongs to the DEAD box helicase family. DDX54/DBP10 subfamily. In terms of assembly, interacts with RRP1 and associates with pre-ribosomal particles.

The protein localises to the nucleus. Its subcellular location is the nucleolus. It carries out the reaction ATP + H2O = ADP + phosphate + H(+). In terms of biological role, ATP-binding RNA helicase involved in the biogenesis of 60S ribosomal subunits and is required for the normal formation of 25S and 5.8S rRNAs. This is ATP-dependent RNA helicase DBP10 (DBP10) from Saccharomyces cerevisiae (strain YJM789) (Baker's yeast).